The chain runs to 61 residues: Large ribosomal subunit protein bL32 (61 aa).

Residues 1 to 44 are disordered; the sequence is MAVQQNRKSRSRRDMRRSHDALTENALTVDQATGETHRRHHVTK. Residues 7 to 16 are compositionally biased toward basic residues; that stretch reads RKSRSRRDMR. Positions 25 to 34 are enriched in polar residues; the sequence is NALTVDQATG.

It belongs to the bacterial ribosomal protein bL32 family.

The protein is Large ribosomal subunit protein bL32 of Acinetobacter baumannii (strain AB307-0294).